Here is a 640-residue protein sequence, read N- to C-terminus: RAP domain-containing protein, chloroplastic (640 aa).

The N-terminal 32 residues, 1 to 32 (MEAALLRPPPLAARGGVSIAIAFSVSRLPSAA), are a transit peptide targeting the chloroplast. The tract at residues 111 to 158 (SLQRMVASPKKKNKKKKSKKTNLKQKKAAEPKPPRDTDDDEDDEEEAD) is disordered. Residues 119 to 136 (PKKKNKKKKSKKTNLKQK) show a composition bias toward basic residues. Residues 137–146 (KAAEPKPPRD) are compositionally biased toward basic and acidic residues. Residues 147–158 (TDDDEDDEEEAD) are compositionally biased toward acidic residues. In terms of domain architecture, RAP spans 575–633 (LAFEIDGPSHFSRNLGTPLGHTAFKRRYIAAAGWNLVSLSHQEWENLEGEFEQLEYLRR).

As to expression, expressed in roots, leaf sheaths, veins of leaf blade, mature leaves, endodermis of culm, panicles and anthers.

It is found in the plastid. The protein resides in the chloroplast. Its function is as follows. Probable RNA-binding protein that plays an essential role in chloroplast development. Regulates the ribosomal proteins homeostasis and ribosomal RNA development in chloroplasts. Involved the regulation of 16S rRNA and required for the expression of chloroplast-associated photosynthetic genes. This is RAP domain-containing protein, chloroplastic from Oryza sativa subsp. japonica (Rice).